The chain runs to 102 residues: Large ribosomal subunit protein bL21 (102 aa).

This sequence belongs to the bacterial ribosomal protein bL21 family. As to quaternary structure, part of the 50S ribosomal subunit. Contacts protein L20.

Its function is as follows. This protein binds to 23S rRNA in the presence of protein L20. The protein is Large ribosomal subunit protein bL21 of Latilactobacillus sakei subsp. sakei (strain 23K) (Lactobacillus sakei subsp. sakei).